Here is a 612-residue protein sequence, read N- to C-terminus: MKLRNDLRNIAIIAHVDHGKTTLVDQLLHQAGTFRANEQVAERAMDSNDLERERGITILAKNTAINYKDTRINILDTPGHADFGGEVERIMKMVDGVVLVVDAYEGCMPQTRFVLKKALEQNLNPVVVVNKIDRDFARPEEVIDEVLDLFIELDANEEQLEFPVVYASAINGTASLDPKQQDENMEALYETIIKHVPAPVDNAEEPLQFQVALLDYNDYVGRIGIGRVFRGTMKVGQQVSLMKLDGTAKSFRVTKIFGFQGLKRVEIEEAKAGDLVAVSGMEDINVGETVCPVDHQDPLPVLRIDEPTLQMTFVVNNSPFAGREGKYVTARKIEERLQSQLQTDVSLRVEPTASPDAWVVSGRGELHLSILIENMRREGYELQVSKPEVIIKEIDGVRCEPVERVQIDVPEEHTGSVMESMGARKGEMVDMINNGNGQVRLIFTVPSRGLIGYSTEFLSLTRGFGILNHTFDSYQPMQAGQVGGRRQGVLVSMENGKATSYGIQGIEDRGVIFVEPGTEVYEGMIVGEHNRDNDLVVNVSKMKQQTNVRSATKDQTTTIKKARIMSLEESLEYLNEDEYCEVTPESIRLRKKILNKNEREKAAKKKKTAGLS.

Residues 5–200 enclose the tr-type G domain; it reads NDLRNIAIIA…TIIKHVPAPV (196 aa). GTP is bound by residues 17–22 and 130–133; these read DHGKTT and NKID.

The protein belongs to the TRAFAC class translation factor GTPase superfamily. Classic translation factor GTPase family. BipA subfamily. Monomer.

The protein resides in the cytoplasm. The catalysed reaction is GTP + H2O = GDP + phosphate + H(+). In terms of biological role, a 50S ribosomal subunit assembly protein with GTPase activity, required for 50S subunit assembly at low temperatures, may also play a role in translation. Binds GTP and analogs. Binds the 70S ribosome between the 30S and 50S subunits, in a similar position as ribosome-bound EF-G; it contacts a number of ribosomal proteins, both rRNAs and the A-site tRNA. The protein is Large ribosomal subunit assembly factor BipA of Bacillus subtilis (strain 168).